A 387-amino-acid chain; its full sequence is Formate-dependent phosphoribosylglycinamide formyltransferase (387 aa).

Residues 12 to 13 (EL) and Glu-72 each bind N(1)-(5-phospho-beta-D-ribosyl)glycinamide. ATP is bound by residues Arg-104, Lys-145, 150–155 (SSGKGQ), 185–188 (EEFI), and Glu-193. Residues 109–300 (DLAARELGLA…EFELHLRAVL (192 aa)) form the ATP-grasp domain. 2 residues coordinate Mg(2+): Glu-258 and Glu-270. Residues Asp-277, Lys-347, and 354 to 355 (RR) contribute to the N(1)-(5-phospho-beta-D-ribosyl)glycinamide site.

It belongs to the PurK/PurT family. Homodimer.

It catalyses the reaction N(1)-(5-phospho-beta-D-ribosyl)glycinamide + formate + ATP = N(2)-formyl-N(1)-(5-phospho-beta-D-ribosyl)glycinamide + ADP + phosphate + H(+). Its pathway is purine metabolism; IMP biosynthesis via de novo pathway; N(2)-formyl-N(1)-(5-phospho-D-ribosyl)glycinamide from N(1)-(5-phospho-D-ribosyl)glycinamide (formate route): step 1/1. Its function is as follows. Involved in the de novo purine biosynthesis. Catalyzes the transfer of formate to 5-phospho-ribosyl-glycinamide (GAR), producing 5-phospho-ribosyl-N-formylglycinamide (FGAR). Formate is provided by PurU via hydrolysis of 10-formyl-tetrahydrofolate. In Anaeromyxobacter dehalogenans (strain 2CP-C), this protein is Formate-dependent phosphoribosylglycinamide formyltransferase.